Consider the following 288-residue polypeptide: Light-independent protochlorophyllide reductase iron-sulfur ATP-binding protein (288 aa).

Residues 12 to 17 and Lys41 each bind ATP; that span reads GIGKST. Position 16 (Ser16) interacts with Mg(2+). Residues Cys97 and Cys131 each coordinate [4Fe-4S] cluster. 182–183 contacts ATP; sequence NR.

Belongs to the NifH/BchL/ChlL family. Homodimer. Protochlorophyllide reductase is composed of three subunits; ChlL, ChlN and ChlB. The cofactor is [4Fe-4S] cluster.

The catalysed reaction is chlorophyllide a + oxidized 2[4Fe-4S]-[ferredoxin] + 2 ADP + 2 phosphate = protochlorophyllide a + reduced 2[4Fe-4S]-[ferredoxin] + 2 ATP + 2 H2O. It functions in the pathway porphyrin-containing compound metabolism; chlorophyll biosynthesis (light-independent). Functionally, component of the dark-operative protochlorophyllide reductase (DPOR) that uses Mg-ATP and reduced ferredoxin to reduce ring D of protochlorophyllide (Pchlide) to form chlorophyllide a (Chlide). This reaction is light-independent. The L component serves as a unique electron donor to the NB-component of the complex, and binds Mg-ATP. The chain is Light-independent protochlorophyllide reductase iron-sulfur ATP-binding protein from Synechocystis sp. (strain ATCC 27184 / PCC 6803 / Kazusa).